The chain runs to 309 residues: Manganese-dependent inorganic pyrophosphatase (309 aa).

Positions 9, 13, 15, 75, 97, and 149 each coordinate Mn(2+).

As to quaternary structure, homodimer. The cofactor is Mn(2+).

The protein localises to the cytoplasm. It carries out the reaction diphosphate + H2O = 2 phosphate + H(+). This is Manganese-dependent inorganic pyrophosphatase (ppaC) from Bacillus subtilis (strain 168).